The following is a 158-amino-acid chain: pH 6 antigen (158 aa).

The signal sequence occupies residues 1–26; it reads MKMKCFAKNALAVTTLMIAACGMANA.

As to quaternary structure, forms a homomer composed of subunits assembled in a large structure.

The protein localises to the fimbrium. Fibrillar structure, part of fimbriae, necessary for full virulence. The chain is pH 6 antigen (psaA) from Yersinia pestis.